A 148-amino-acid chain; its full sequence is Small ribosomal subunit protein uS13 (148 aa).

This sequence belongs to the universal ribosomal protein uS13 family. In terms of assembly, part of the 30S ribosomal subunit. Forms a loose heterodimer with protein S19. Forms two bridges to the 50S subunit in the 70S ribosome.

In terms of biological role, located at the top of the head of the 30S subunit, it contacts several helices of the 16S rRNA. In the 70S ribosome it contacts the 23S rRNA (bridge B1a) and protein L5 of the 50S subunit (bridge B1b), connecting the 2 subunits; these bridges are implicated in subunit movement. The chain is Small ribosomal subunit protein uS13 from Pyrococcus horikoshii (strain ATCC 700860 / DSM 12428 / JCM 9974 / NBRC 100139 / OT-3).